A 642-amino-acid chain; its full sequence is RNA polymerase sigma factor RpoD (642 aa).

Residues 199–228 are disordered; sequence HLETTAPEKPSNDNSDENEDDEESEEDADE. A compositionally biased stretch (acidic residues) spans 212–228; that stretch reads NSDENEDDEESEEDADE. Residues 403–473 are sigma-70 factor domain-2; the sequence is MIQANLRLVI…TRSIADQART (71 aa). Residues 427–430 carry the Interaction with polymerase core subunit RpoC motif; it reads DLIQ. A sigma-70 factor domain-3 region spans residues 482-558; it reads ETINKMNRIS…DANNVAPADA (77 aa). The interval 571–624 is sigma-70 factor domain-4; that stretch reads ILESLTPREAKVLRMRFGIDMNTDHTLEEVGRQFDVTRERIRQIEAKALRKLRH. The segment at residues 597 to 616 is a DNA-binding region (H-T-H motif); it reads LEEVGRQFDVTRERIRQIEA.

Belongs to the sigma-70 factor family. RpoD/SigA subfamily. As to quaternary structure, interacts transiently with the RNA polymerase catalytic core.

It is found in the cytoplasm. Its function is as follows. Sigma factors are initiation factors that promote the attachment of RNA polymerase to specific initiation sites and are then released. This sigma factor is the primary sigma factor during exponential growth. The sequence is that of RNA polymerase sigma factor RpoD from Neisseria gonorrhoeae.